Here is a 507-residue protein sequence, read N- to C-terminus: Maturase K (507 aa).

Belongs to the intron maturase 2 family. MatK subfamily.

Its subcellular location is the plastid. It is found in the chloroplast. In terms of biological role, usually encoded in the trnK tRNA gene intron. Probably assists in splicing its own and other chloroplast group II introns. This Fagopyrum tataricum (Tartarian buckwheat) protein is Maturase K.